A 190-amino-acid chain; its full sequence is Segregation and condensation protein B (190 aa).

It belongs to the ScpB family. Homodimer. Homodimerization may be required to stabilize the binding of ScpA to the Smc head domains. Component of a cohesin-like complex composed of ScpA, ScpB and the Smc homodimer, in which ScpA and ScpB bind to the head domain of Smc. The presence of the three proteins is required for the association of the complex with DNA.

Its subcellular location is the cytoplasm. Participates in chromosomal partition during cell division. May act via the formation of a condensin-like complex containing Smc and ScpA that pull DNA away from mid-cell into both cell halves. In Ruminiclostridium cellulolyticum (strain ATCC 35319 / DSM 5812 / JCM 6584 / H10) (Clostridium cellulolyticum), this protein is Segregation and condensation protein B.